The primary structure comprises 454 residues: Macrophage scavenger receptor types I and II (454 aa).

The interval 1–22 (MAQWDSFTDQQEDTDSCSESVK) is disordered. Topologically, residues 1 to 50 (MAQWDSFTDQQEDTDSCSESVKFDARSNTALLPPNPKNGPPLQEKLKSFK) are cytoplasmic. S27 is subject to Phosphoserine. The chain crosses the membrane as a helical; Signal-anchor for type II membrane protein span at residues 51–73 (AALIALYLLVFAVLIPIIAIMAA). The interval 74 to 109 (QLLKWEMKNCTVGSINANSVSSSLLGRGNDSEHEVR) is spacer. Residues 74-454 (QLLKWEMKNC…GEDAGVTCTL (381 aa)) lie on the Extracellular side of the membrane. N82, N102, N143, N184, N221, N249, and N267 each carry an N-linked (GlcNAc...) asparagine glycan. Residues 199 to 256 (VKFQENTLKGQEEISKLKERVHNASAEIMSMKEEQVHLEQEIKREVKVLNNITNDLRL) are a coiled coil. The segment at 267 to 347 (NITLIQGPPG…KGEKGSGSIL (81 aa)) is disordered. Positions 273–344 (GPPGPPGEKG…KGQKGEKGSG (72 aa)) constitute a Collagen-like domain. The SRCR domain maps to 353-453 (VRLVGGRGPH…HGEDAGVTCT (101 aa)). Intrachain disulfides connect C378–C442, C391–C452, and C422–C432.

In terms of assembly, homotrimer. Interacts with MYO18A.

It is found in the membrane. Functionally, membrane glycoproteins implicated in the pathologic deposition of cholesterol in arterial walls during atherogenesis. Two types of receptor subunits exist. These receptors mediate the endocytosis of a diverse group of macromolecules, including modified low density lipoproteins (LDL). The sequence is that of Macrophage scavenger receptor types I and II (MSR1) from Oryctolagus cuniculus (Rabbit).